A 115-amino-acid polypeptide reads, in one-letter code: NADH-ubiquinone oxidoreductase chain 3 (115 aa).

The next 3 helical transmembrane spans lie at 4–24, 55–75, and 84–104; these read IMAM…AFWL, FFLV…LLPL, and MFLT…GLAY.

It belongs to the complex I subunit 3 family. Core subunit of respiratory chain NADH dehydrogenase (Complex I) which is composed of 45 different subunits. Interacts with TMEM186. Interacts with TMEM242.

The protein resides in the mitochondrion inner membrane. It catalyses the reaction a ubiquinone + NADH + 5 H(+)(in) = a ubiquinol + NAD(+) + 4 H(+)(out). Functionally, core subunit of the mitochondrial membrane respiratory chain NADH dehydrogenase (Complex I) which catalyzes electron transfer from NADH through the respiratory chain, using ubiquinone as an electron acceptor. Essential for the catalytic activity of complex I. The polypeptide is NADH-ubiquinone oxidoreductase chain 3 (Phyllotis darwinii (Darwin's leaf-eared mouse)).